A 163-amino-acid chain; its full sequence is Photosystem II extrinsic protein V (163 aa).

Positions M1–A26 are cleaved as a signal peptide. The heme c site is built by C63, C66, H67, and H118.

This sequence belongs to the cytochrome c family. PsbV subfamily. In terms of assembly, PSII is composed of 1 copy each of membrane proteins PsbA, PsbB, PsbC, PsbD, PsbE, PsbF, PsbH, PsbI, PsbJ, PsbK, PsbL, PsbM, PsbT, PsbY, PsbZ, Psb30/Ycf12, at least 3 peripheral proteins of the oxygen-evolving complex and a large number of cofactors. It forms dimeric complexes. The extrinsic subunits in red algae are PsbO (OEC33), PsbQ', cytochrome c-550 and PsbU. Requires heme c as cofactor.

The protein localises to the plastid. Its subcellular location is the chloroplast thylakoid membrane. Its function is as follows. One of the extrinsic, lumenal subunits of photosystem II (PSII). PSII is a light-driven water plastoquinone oxidoreductase, using light energy to abstract electrons from H(2)O, generating a proton gradient subsequently used for ATP formation. The extrinsic proteins stabilize the structure of photosystem II oxygen-evolving complex (OEC), the ion environment of oxygen evolution and protect the OEC against heat-induced inactivation. The chain is Photosystem II extrinsic protein V from Pyropia yezoensis (Susabi-nori).